A 207-amino-acid polypeptide reads, in one-letter code: LexA repressor (207 aa).

The H-T-H motif DNA-binding region spans 28-48; sequence VREIGEAVGLASSSTVHGHLA. Residues S129 and K167 each act as for autocatalytic cleavage activity in the active site.

The protein belongs to the peptidase S24 family. As to quaternary structure, homodimer.

It catalyses the reaction Hydrolysis of Ala-|-Gly bond in repressor LexA.. In terms of biological role, represses a number of genes involved in the response to DNA damage (SOS response), including recA and lexA. In the presence of single-stranded DNA, RecA interacts with LexA causing an autocatalytic cleavage which disrupts the DNA-binding part of LexA, leading to derepression of the SOS regulon and eventually DNA repair. This Brevibacillus brevis (strain 47 / JCM 6285 / NBRC 100599) protein is LexA repressor.